A 115-amino-acid polypeptide reads, in one-letter code: NADH-ubiquinone oxidoreductase chain 3 (115 aa).

3 consecutive transmembrane segments (helical) span residues 4 to 24 (ILTL…AFWL), 55 to 75 (FFLV…LLPL), and 84 to 104 (SYLT…GLAY).

It belongs to the complex I subunit 3 family. Core subunit of respiratory chain NADH dehydrogenase (Complex I) which is composed of 45 different subunits. Interacts with TMEM186. Interacts with TMEM242.

The protein resides in the mitochondrion inner membrane. It carries out the reaction a ubiquinone + NADH + 5 H(+)(in) = a ubiquinol + NAD(+) + 4 H(+)(out). Core subunit of the mitochondrial membrane respiratory chain NADH dehydrogenase (Complex I) which catalyzes electron transfer from NADH through the respiratory chain, using ubiquinone as an electron acceptor. Essential for the catalytic activity of complex I. This chain is NADH-ubiquinone oxidoreductase chain 3, found in Necromys lactens (Rufous-bellied bolo mouse).